Reading from the N-terminus, the 129-residue chain is Fluoride-specific ion channel FluC 1 (129 aa).

A run of 3 helical transmembrane segments spans residues 43 to 63 (ASLLLGLVAGAAGAGAPPAWV), 68 to 88 (VVSLVGTGLCGALSTYSTFSY), and 100 to 120 (LLAAANVAGSVLAAFGAAALG). Residues G78 and S81 each contribute to the Na(+) site.

The protein belongs to the fluoride channel Fluc/FEX (TC 1.A.43) family.

The protein localises to the cell membrane. It catalyses the reaction fluoride(in) = fluoride(out). Na(+) is not transported, but it plays an essential structural role and its presence is essential for fluoride channel function. Fluoride-specific ion channel. Important for reducing fluoride concentration in the cell, thus reducing its toxicity. The protein is Fluoride-specific ion channel FluC 1 of Frankia casuarinae (strain DSM 45818 / CECT 9043 / HFP020203 / CcI3).